Here is a 427-residue protein sequence, read N- to C-terminus: 3-phosphoshikimate 1-carboxyvinyltransferase (427 aa).

3-phosphoshikimate is bound by residues K20, S21, and R25. Phosphoenolpyruvate is bound at residue K20. Residues G92 and R120 each contribute to the phosphoenolpyruvate site. Residues S166, Q168, D312, and K339 each contribute to the 3-phosphoshikimate site. Position 168 (Q168) interacts with phosphoenolpyruvate. Catalysis depends on D312, which acts as the Proton acceptor. Phosphoenolpyruvate is bound by residues R343 and R385.

It belongs to the EPSP synthase family. Monomer.

Its subcellular location is the cytoplasm. The enzyme catalyses 3-phosphoshikimate + phosphoenolpyruvate = 5-O-(1-carboxyvinyl)-3-phosphoshikimate + phosphate. It participates in metabolic intermediate biosynthesis; chorismate biosynthesis; chorismate from D-erythrose 4-phosphate and phosphoenolpyruvate: step 6/7. In terms of biological role, catalyzes the transfer of the enolpyruvyl moiety of phosphoenolpyruvate (PEP) to the 5-hydroxyl of shikimate-3-phosphate (S3P) to produce enolpyruvyl shikimate-3-phosphate and inorganic phosphate. The protein is 3-phosphoshikimate 1-carboxyvinyltransferase of Streptococcus equi subsp. equi (strain 4047).